A 442-amino-acid chain; its full sequence is tRNA-2-methylthio-N(6)-dimethylallyladenosine synthase (442 aa).

The region spanning 2–120 (KKVFIRTFGC…LPKMIVDKET (119 aa)) is the MTTase N-terminal domain. The [4Fe-4S] cluster site is built by Cys11, Cys49, Cys83, Cys157, Cys161, and Cys164. In terms of domain architecture, Radical SAM core spans 143 to 375 (RVEGGAAFVS…NEVIEAETAR (233 aa)). Residues 378 to 441 (QTMIGTVQRC…TFSLRGKVVE (64 aa)) form the TRAM domain.

Belongs to the methylthiotransferase family. MiaB subfamily. As to quaternary structure, monomer. [4Fe-4S] cluster is required as a cofactor.

It localises to the cytoplasm. It catalyses the reaction N(6)-dimethylallyladenosine(37) in tRNA + (sulfur carrier)-SH + AH2 + 2 S-adenosyl-L-methionine = 2-methylsulfanyl-N(6)-dimethylallyladenosine(37) in tRNA + (sulfur carrier)-H + 5'-deoxyadenosine + L-methionine + A + S-adenosyl-L-homocysteine + 2 H(+). Functionally, catalyzes the methylthiolation of N6-(dimethylallyl)adenosine (i(6)A), leading to the formation of 2-methylthio-N6-(dimethylallyl)adenosine (ms(2)i(6)A) at position 37 in tRNAs that read codons beginning with uridine. The chain is tRNA-2-methylthio-N(6)-dimethylallyladenosine synthase from Neisseria meningitidis serogroup C / serotype 2a (strain ATCC 700532 / DSM 15464 / FAM18).